The following is a 380-amino-acid chain: MTLVEEILDAKAGEVVIRNVDLVYAHDGTMPLIIEAFNKVFNSVKARAYVFFDHVYPAPTVKVANLQKEIREFARRHGIPVVEGKGISHQLVVEMGLAEKSRIVVGGDSHTPTLGALGVFAVGMGATDVAVVLGLGKTWLRVPESVAVIFEGKPSRTTMAADVMIRLITSLRNYDMNYKALEFFNVPFTADERLTLTNFSVEANAKTALIGEEYDGRNYIKEISFELSSLGPMVAKPFSPANGVEVEKVEGTKIDQVFIGSCTNGRFEHIKRAAEILKGEEVAVRTIIGPASVNVYKRMVREGIVDILLDAGATILPPGCGPCLGRHMGVLGDKEVVLSTTNRNFRGRMGSPTAEIYLASPLTAAVSALYGEITSPGGEV.

Residues cysteine 262, cysteine 320, and cysteine 323 each coordinate [4Fe-4S] cluster.

Belongs to the aconitase/IPM isomerase family. LeuC type 2 subfamily. Heterodimer of LeuC and LeuD. Requires [4Fe-4S] cluster as cofactor.

The enzyme catalyses (2R,3S)-3-isopropylmalate = (2S)-2-isopropylmalate. It participates in amino-acid biosynthesis; L-leucine biosynthesis; L-leucine from 3-methyl-2-oxobutanoate: step 2/4. Its function is as follows. Catalyzes the isomerization between 2-isopropylmalate and 3-isopropylmalate, via the formation of 2-isopropylmaleate. The polypeptide is 3-isopropylmalate dehydratase large subunit (Pyrococcus horikoshii (strain ATCC 700860 / DSM 12428 / JCM 9974 / NBRC 100139 / OT-3)).